Here is an 82-residue protein sequence, read N- to C-terminus: NADH-ubiquinone oxidoreductase 9.5 kDa subunit (82 aa).

A helical membrane pass occupies residues 25–43 (AYFYSCVIAGLGPVFLTVV).

The protein belongs to the complex I NDUFA3 subunit family. Complex I is composed of about 40 different subunits.

The protein localises to the mitochondrion inner membrane. Its function is as follows. Accessory subunit of the mitochondrial membrane respiratory chain NADH dehydrogenase (Complex I), that is believed not to be involved in catalysis. Complex I functions in the transfer of electrons from NADH to the respiratory chain. The immediate electron acceptor for the enzyme is believed to be ubiquinone. This subunit binds ubiquinone. The chain is NADH-ubiquinone oxidoreductase 9.5 kDa subunit (nuo9.5) from Neurospora crassa (strain ATCC 24698 / 74-OR23-1A / CBS 708.71 / DSM 1257 / FGSC 987).